The following is a 715-amino-acid chain: Epidermal growth factor receptor kinase substrate 8-like protein 2 (715 aa).

A PID domain is found at 46–202; that stretch reads MHETSQYHVQ…RQRQSILPPP (157 aa). The segment at 183 to 243 is disordered; that stretch reads QTLKGHQEKI…GFRRRESQEE (61 aa). Residues 199-208 are compositionally biased toward pro residues; sequence LPPPQGPAPI. Basic and acidic residues-rich tracts occupy residues 213 to 222 and 234 to 243; these read RGGDSPEAKN and GFRRRESQEE. Phosphoserine is present on S240. T303 carries the phosphothreonine modification. Positions 448–487 are disordered; it reads VSPVSRQSIRNSQKHSPTSEPTPPGDALPPVSSPHTHRGY. Position 449 is a phosphoserine (S449). Residues 451–466 are compositionally biased toward polar residues; it reads VSRQSIRNSQKHSPTS. Position 469 is a phosphothreonine (T469). The region spanning 492 to 551 is the SH3 domain; it reads AMAKYVKILYDFTARNANELSVLKDEVLEVLEDGRQWWKLRSRSGQAGYVPCNILGEARP. Phosphoserine is present on S570.

It belongs to the EPS8 family. Interacts with ABI1. Part of a complex that contains SOS1, ABI1 and EPS8L2. Associates with F-actin. As to expression, detected in fibroblasts and placenta.

It localises to the cytoplasm. The protein localises to the cell projection. Its subcellular location is the stereocilium. Its function is as follows. Stimulates guanine exchange activity of SOS1. May play a role in membrane ruffling and remodeling of the actin cytoskeleton. In the cochlea, is required for stereocilia maintenance in adult hair cells. The sequence is that of Epidermal growth factor receptor kinase substrate 8-like protein 2 (EPS8L2) from Homo sapiens (Human).